Here is a 395-residue protein sequence, read N- to C-terminus: F-box/kelch-repeat protein At3g13680 (395 aa).

In terms of domain architecture, F-box spans 1–47 (MTTMGDLPGDLVEEILSRVPLTSLRAIRSTCQKWNSLSKSQICGRKA). Kelch repeat units lie at residues 154–202 (ILRI…SLKG), 210–256 (KKET…VSLA), 265–314 (VLYQ…FIDE), and 337–383 (IVYI…LVQL).

The polypeptide is F-box/kelch-repeat protein At3g13680 (Arabidopsis thaliana (Mouse-ear cress)).